The primary structure comprises 434 residues: Zinc finger protein Pegasus (434 aa).

The disordered stretch occupies residues 33-57 (VSSDKEAETLQGAGTDSDQNGLDHP). C2H2-type zinc fingers lie at residues 82 to 104 (LKCR…IRIH), 110 to 132 (HRCH…MRSH), and 138 to 161 (YKCE…RRKH). A compositionally biased stretch (polar residues) spans 260-274 (GQLSSLPPDTQNPAS). A disordered region spans residues 260 to 357 (GQLSSLPPDT…PSTPAPALPA (98 aa)). Residues 296-313 (CASAVSTSVAQSSSPASP) are compositionally biased toward low complexity. Over residues 337–349 (RTSTPSISNSQPS) the composition is skewed to polar residues. 2 consecutive C2H2-type zinc fingers follow at residues 364-386 (HHCQ…MGCH) and 392-419 (FQCN…CCQH).

The protein belongs to the Ikaros C2H2-type zinc-finger protein family. As to quaternary structure, probably self-associates.

It localises to the nucleus. In terms of biological role, transcriptional repressor that binds the core 5'GNNTGTNG-3' DNA consensus sequence. In Xenopus tropicalis (Western clawed frog), this protein is Zinc finger protein Pegasus (ikzf5).